A 265-amino-acid chain; its full sequence is NAD kinase (265 aa).

D45 serves as the catalytic Proton acceptor. NAD(+)-binding positions include 45–46, 122–123, R148, D150, 161–166, and A185; these read DG, NE, and TAYSKS.

It belongs to the NAD kinase family. Requires a divalent metal cation as cofactor.

The protein resides in the cytoplasm. The enzyme catalyses NAD(+) + ATP = ADP + NADP(+) + H(+). In terms of biological role, involved in the regulation of the intracellular balance of NAD and NADP, and is a key enzyme in the biosynthesis of NADP. Catalyzes specifically the phosphorylation on 2'-hydroxyl of the adenosine moiety of NAD to yield NADP. The chain is NAD kinase from Lactobacillus delbrueckii subsp. bulgaricus (strain ATCC 11842 / DSM 20081 / BCRC 10696 / JCM 1002 / NBRC 13953 / NCIMB 11778 / NCTC 12712 / WDCM 00102 / Lb 14).